Reading from the N-terminus, the 505-residue chain is Maturase K (505 aa).

It belongs to the intron maturase 2 family. MatK subfamily.

Its subcellular location is the plastid. It localises to the chloroplast. Usually encoded in the trnK tRNA gene intron. Probably assists in splicing its own and other chloroplast group II introns. The sequence is that of Maturase K from Dioon edule (Virgin's palm).